The sequence spans 101 residues: Small ribosomal subunit protein uS14 (101 aa).

It belongs to the universal ribosomal protein uS14 family. Part of the 30S ribosomal subunit. Contacts proteins S3 and S10.

In terms of biological role, binds 16S rRNA, required for the assembly of 30S particles and may also be responsible for determining the conformation of the 16S rRNA at the A site. This is Small ribosomal subunit protein uS14 from Hahella chejuensis (strain KCTC 2396).